The chain runs to 448 residues: Neurexin-1b-beta (448 aa).

Residues 1-38 form the signal peptide; that stretch reads MFGGWRLVVWQIFSEIITRRLGFWICLYFAALSVGMIS. Over 39–375 the chain is Extracellular; sequence GSEPLVRTRH…EVFRESNGTT (337 aa). One can recognise a Laminin G-like domain in the interval 71–269; that stretch reads STYVFGRQGG…DPNVRMEGSV (199 aa). The chain crosses the membrane as a helical span at residues 376–396; that stretch reads GMVVGIVAGAALCILILLYAM. Over 397 to 448 the chain is Cytoplasmic; it reads YKYRNRDEGSYHVDESRNYICNSNGAALKEKNTADDDSGSKSKKNKNKEYYV. The span at 426 to 436 shows a compositional bias: basic and acidic residues; it reads EKNTADDDSGS. A disordered region spans residues 426–448; the sequence is EKNTADDDSGSKSKKNKNKEYYV.

The protein belongs to the neurexin family.

It is found in the membrane. Its function is as follows. Neuronal cell surface protein that may be involved in cell recognition and cell adhesion. May play a role in formation or maintenance of synaptic junctions. This chain is Neurexin-1b-beta (nrxn1b), found in Danio rerio (Zebrafish).